The primary structure comprises 208 residues: Guanylate kinase (208 aa).

The Guanylate kinase-like domain occupies Gly-4–Arg-184. Ala-11–Ser-18 contacts ATP.

This sequence belongs to the guanylate kinase family.

The protein localises to the cytoplasm. It carries out the reaction GMP + ATP = GDP + ADP. In terms of biological role, essential for recycling GMP and indirectly, cGMP. The sequence is that of Guanylate kinase from Photobacterium profundum (strain SS9).